A 65-amino-acid chain; its full sequence is Small ribosomal subunit protein bS21 (65 aa).

A disordered region spans residues 39–65; the sequence is EKPSIKRKKKAIAARKRALKKQRKMMD. Basic residues predominate over residues 43–65; the sequence is IKRKKKAIAARKRALKKQRKMMD.

Belongs to the bacterial ribosomal protein bS21 family.

The polypeptide is Small ribosomal subunit protein bS21 (Pelobacter propionicus (strain DSM 2379 / NBRC 103807 / OttBd1)).